The following is a 270-amino-acid chain: Proteasome subunit alpha type-1 (270 aa).

Residues 239–270 (SMEAAEEAPAAEAESSSMQEEDKGTDAAPMDI) are disordered. Over residues 245–256 (EAPAAEAESSSM) the composition is skewed to low complexity.

It belongs to the peptidase T1A family. In terms of assembly, the 26S proteasome consists of a 20S proteasome core and two 19S regulatory subunits. The 20S proteasome core is composed of 28 subunits that are arranged in four stacked rings, resulting in a barrel-shaped structure. The two end rings are each formed by seven alpha subunits, and the two central rings are each formed by seven beta subunits. The catalytic chamber with the active sites is on the inside of the barrel.

Its subcellular location is the cytoplasm. It localises to the nucleus. Functionally, the proteasome is a multicatalytic proteinase complex which is characterized by its ability to cleave peptides with Arg, Phe, Tyr, Leu, and Glu adjacent to the leaving group at neutral or slightly basic pH. The proteasome has an ATP-dependent proteolytic activity. This chain is Proteasome subunit alpha type-1 (PAF1), found in Oryza sativa subsp. japonica (Rice).